The chain runs to 164 residues: R-phycoerythrin alpha chain (164 aa).

8 residues coordinate (2R,3E)-phycoerythrobilin: Asn47, Lys81, Cys82, Arg84, His88, Arg137, Cys139, and Arg142.

It belongs to the phycobiliprotein family. As to quaternary structure, heterododecamer of 6 alpha and 6 beta chains. The basic functional unit of phycobiliproteins is a ring-shaped hexamer formed from two back-to-back trimers contacting via the alpha chain subunits. The trimers are composed of alpha/beta subunit heterodimers arranged around a three-fold axis of symmetry. The phycoerythrins also contain a gamma subunit which is located in the center of the hexamer. In terms of processing, contains two covalently linked phycoerythrobilin chromophores.

Its subcellular location is the plastid. The protein localises to the chloroplast thylakoid membrane. Its function is as follows. Light-harvesting photosynthetic tetrapyrrole chromophore-protein from the phycobiliprotein complex. The chain is R-phycoerythrin alpha chain (rpeA) from Agarophyton chilense (Red seaweed).